The chain runs to 226 residues: MKPKAITVLSGGLDSTVATSIYANDYDITAITFNYGQQSIKQELKHAKMICEKLDMKHIVIDLPWLKEISNSSLTTDKSIPQPSDNDLDDYDKSIETAKSVWVPARNTVFCSIALSYAESIQAKIIIVGWDYEEAVTFPDNSKEYLKSFNETIKYGSFDDIEIKAPLIDMTKEDIVKKGHEVNAPMNISYSCYVGCDTHCGVCESCKRRKRAFTRANVTDYTEYEK.

ATP is bound at residue 9 to 19 (LSGGLDSTVAT). C192, C200, C203, and C206 together coordinate Zn(2+).

This sequence belongs to the QueC family. Zn(2+) is required as a cofactor.

The catalysed reaction is 7-carboxy-7-deazaguanine + NH4(+) + ATP = 7-cyano-7-deazaguanine + ADP + phosphate + H2O + H(+). The protein operates within purine metabolism; 7-cyano-7-deazaguanine biosynthesis. Functionally, catalyzes the ATP-dependent conversion of 7-carboxy-7-deazaguanine (CDG) to 7-cyano-7-deazaguanine (preQ(0)). The protein is 7-cyano-7-deazaguanine synthase of Methanosphaera stadtmanae (strain ATCC 43021 / DSM 3091 / JCM 11832 / MCB-3).